We begin with the raw amino-acid sequence, 200 residues long: NADH-quinone oxidoreductase subunit I 1 (200 aa).

4Fe-4S ferredoxin-type domains lie at 52-82 and 98-127; these read LNRH…VEGA and RVYQ…MTNE. Cysteine 62, cysteine 65, cysteine 68, cysteine 72, cysteine 107, cysteine 110, cysteine 113, and cysteine 117 together coordinate [4Fe-4S] cluster. Positions 181-200 are disordered; sequence TERQVAVSKGEKPQDEGVEA. Positions 189 to 200 are enriched in basic and acidic residues; that stretch reads KGEKPQDEGVEA.

Belongs to the complex I 23 kDa subunit family. In terms of assembly, NDH-1 is composed of 14 different subunits. Subunits NuoA, H, J, K, L, M, N constitute the membrane sector of the complex. [4Fe-4S] cluster is required as a cofactor.

The protein localises to the cell membrane. The catalysed reaction is a quinone + NADH + 5 H(+)(in) = a quinol + NAD(+) + 4 H(+)(out). In terms of biological role, NDH-1 shuttles electrons from NADH, via FMN and iron-sulfur (Fe-S) centers, to quinones in the respiratory chain. The immediate electron acceptor for the enzyme in this species is believed to be ubiquinone. Couples the redox reaction to proton translocation (for every two electrons transferred, four hydrogen ions are translocated across the cytoplasmic membrane), and thus conserves the redox energy in a proton gradient. In Streptomyces avermitilis (strain ATCC 31267 / DSM 46492 / JCM 5070 / NBRC 14893 / NCIMB 12804 / NRRL 8165 / MA-4680), this protein is NADH-quinone oxidoreductase subunit I 1.